The following is a 505-amino-acid chain: 2,3-bisphosphoglycerate-independent phosphoglycerate mutase (505 aa).

Mn(2+)-binding residues include Asp-11 and Ser-61. The Phosphoserine intermediate role is filled by Ser-61. Substrate is bound by residues His-122, 152–153, Arg-184, Arg-190, 258–261, and Lys-331; these read RD and RPDR. Residues Asp-396, His-400, Asp-437, His-438, and His-455 each contribute to the Mn(2+) site.

Belongs to the BPG-independent phosphoglycerate mutase family. In terms of assembly, monomer. It depends on Mn(2+) as a cofactor.

It catalyses the reaction (2R)-2-phosphoglycerate = (2R)-3-phosphoglycerate. It participates in carbohydrate degradation; glycolysis; pyruvate from D-glyceraldehyde 3-phosphate: step 3/5. In terms of biological role, catalyzes the interconversion of 2-phosphoglycerate and 3-phosphoglycerate. This chain is 2,3-bisphosphoglycerate-independent phosphoglycerate mutase, found in Mesomycoplasma hyopneumoniae (strain 7448) (Mycoplasma hyopneumoniae).